A 600-amino-acid polypeptide reads, in one-letter code: Aspartate--tRNA(Asp/Asn) ligase (600 aa).

Position 183 (glutamate 183) interacts with L-aspartate. An aspartate region spans residues 207–210 (QLFK). Residue arginine 229 coordinates L-aspartate. ATP contacts are provided by residues 229–231 (RDE) and glutamine 238. Histidine 456 contacts L-aspartate. ATP is bound at residue glutamate 490. L-aspartate is bound at residue arginine 497. Residue 542-545 (GLDR) participates in ATP binding.

The protein belongs to the class-II aminoacyl-tRNA synthetase family. Type 1 subfamily. Homodimer.

It is found in the cytoplasm. It catalyses the reaction tRNA(Asx) + L-aspartate + ATP = L-aspartyl-tRNA(Asx) + AMP + diphosphate. In terms of biological role, aspartyl-tRNA synthetase with relaxed tRNA specificity since it is able to aspartylate not only its cognate tRNA(Asp) but also tRNA(Asn). Reaction proceeds in two steps: L-aspartate is first activated by ATP to form Asp-AMP and then transferred to the acceptor end of tRNA(Asp/Asn). This Moorella thermoacetica (strain ATCC 39073 / JCM 9320) protein is Aspartate--tRNA(Asp/Asn) ligase.